The primary structure comprises 1056 residues: 120.7 kDa protein in NOF-FB transposable element (1056 aa).

The interval 716-749 (KTIKPTEGNDAEDNDTDDENKEMDLSEQPKEKPR) is disordered. A compositionally biased stretch (acidic residues) spans 724 to 736 (NDAEDNDTDDENK). Residues 737–749 (EMDLSEQPKEKPR) show a composition bias toward basic and acidic residues.

The protein resides in the nucleus. Its function is as follows. May be involved in the transposition of NOF-FB and other FB elements. The sequence is that of 120.7 kDa protein in NOF-FB transposable element (NOF) from Drosophila melanogaster (Fruit fly).